Consider the following 485-residue polypeptide: N-acetylglucosaminyltransferase (485 aa).

This sequence belongs to the NodC/HAS family.

It localises to the cell membrane. Its function is as follows. May be involved in the synthesis of NodRm-1, a sulfated N-acyl-beta-1,4-tetrasaccharide of N-acetylglucosamine which initiates a series of events in the host plant species leading eventually to nodulation. This is N-acetylglucosaminyltransferase (nodC) from Bradyrhizobium diazoefficiens (strain JCM 10833 / BCRC 13528 / IAM 13628 / NBRC 14792 / USDA 110).